The primary structure comprises 414 residues: Gamma-glutamyl phosphate reductase (414 aa).

Belongs to the gamma-glutamyl phosphate reductase family.

The protein resides in the cytoplasm. The catalysed reaction is L-glutamate 5-semialdehyde + phosphate + NADP(+) = L-glutamyl 5-phosphate + NADPH + H(+). It functions in the pathway amino-acid biosynthesis; L-proline biosynthesis; L-glutamate 5-semialdehyde from L-glutamate: step 2/2. Its function is as follows. Catalyzes the NADPH-dependent reduction of L-glutamate 5-phosphate into L-glutamate 5-semialdehyde and phosphate. The product spontaneously undergoes cyclization to form 1-pyrroline-5-carboxylate. This chain is Gamma-glutamyl phosphate reductase, found in Limosilactobacillus reuteri (strain DSM 20016) (Lactobacillus reuteri).